Reading from the N-terminus, the 182-residue chain is Putative manganese efflux pump MntP (182 aa).

The next 6 helical transmembrane spans lie at 6 to 26 (LIPL…VSLG), 37 to 57 (ILYI…IGMV), 71 to 91 (HFAG…SSIL), 101 to 121 (IGIS…SVGL), 131 to 151 (IITI…GLLI), and 162 to 182 (YGEI…LFPI).

This sequence belongs to the MntP (TC 9.B.29) family.

Its subcellular location is the cell membrane. Its function is as follows. Probably functions as a manganese efflux pump. The chain is Putative manganese efflux pump MntP from Bacillus anthracis (strain A0248).